The primary structure comprises 233 residues: Small ribosomal subunit protein uS2 (233 aa).

Belongs to the universal ribosomal protein uS2 family.

The protein is Small ribosomal subunit protein uS2 of Clostridium novyi (strain NT).